We begin with the raw amino-acid sequence, 350 residues long: Probable L-aspartate decarboxylase (350 aa).

Lysine 206 is subject to N6-(pyridoxal phosphate)lysine.

It belongs to the group II decarboxylase family. MfnA subfamily. Pyridoxal 5'-phosphate is required as a cofactor.

It catalyses the reaction L-aspartate + H(+) = beta-alanine + CO2. Its pathway is cofactor biosynthesis; coenzyme A biosynthesis. Functionally, catalyzes the decarboxylation of L-aspartate to produce beta-alanine. The polypeptide is Probable L-aspartate decarboxylase (Haloarcula marismortui (strain ATCC 43049 / DSM 3752 / JCM 8966 / VKM B-1809) (Halobacterium marismortui)).